The primary structure comprises 349 residues: D-alanine--D-alanine ligase (349 aa).

Positions 132 to 335 (KHVFEAVGVP…YSDLIEKLVD (204 aa)) constitute an ATP-grasp domain. 162–217 (VEKLEFPVFVKPANMGSSVGISKVDDLADLQPALSEAYKYDNRVVIEQGVDAREIE) contacts ATP. 3 residues coordinate Mg(2+): Asp289, Glu302, and Asn304.

The protein belongs to the D-alanine--D-alanine ligase family. It depends on Mg(2+) as a cofactor. Mn(2+) serves as cofactor.

It is found in the cytoplasm. It catalyses the reaction 2 D-alanine + ATP = D-alanyl-D-alanine + ADP + phosphate + H(+). Its pathway is cell wall biogenesis; peptidoglycan biosynthesis. Its function is as follows. Cell wall formation. The polypeptide is D-alanine--D-alanine ligase (Lactococcus lactis subsp. cremoris (strain SK11)).